A 267-amino-acid polypeptide reads, in one-letter code: 1-(5-phosphoribosyl)-5-[(5-phosphoribosylamino)methylideneamino] imidazole-4-carboxamide isomerase (267 aa).

It belongs to the HisA/HisF family.

It localises to the cytoplasm. The catalysed reaction is 1-(5-phospho-beta-D-ribosyl)-5-[(5-phospho-beta-D-ribosylamino)methylideneamino]imidazole-4-carboxamide = 5-[(5-phospho-1-deoxy-D-ribulos-1-ylimino)methylamino]-1-(5-phospho-beta-D-ribosyl)imidazole-4-carboxamide. It functions in the pathway amino-acid biosynthesis; L-histidine biosynthesis; L-histidine from 5-phospho-alpha-D-ribose 1-diphosphate: step 4/9. This Kluyveromyces lactis (strain ATCC 8585 / CBS 2359 / DSM 70799 / NBRC 1267 / NRRL Y-1140 / WM37) (Yeast) protein is 1-(5-phosphoribosyl)-5-[(5-phosphoribosylamino)methylideneamino] imidazole-4-carboxamide isomerase (HIS6).